Here is a 738-residue protein sequence, read N- to C-terminus: Glycogen [starch] synthase, muscle (738 aa).

S8 carries the post-translational modification Phosphoserine; by AMPK and PKA. S11 is subject to Phosphoserine. A UDP-binding site is contributed by K39. UDP-alpha-D-glucose-binding residues include H205 and R211. H291, E292, Q294, H297, and K301 together coordinate alpha-D-glucose 6-phosphate. R331 provides a ligand contact to UDP. R331 lines the UDP-alpha-D-glucose pocket. Phosphoserine is present on S412. Alpha-D-glucose 6-phosphate is bound at residue H501. UDP-alpha-D-glucose-binding residues include E510, W512, and G513. T515 is a UDP binding site. R582 and R586 together coordinate alpha-D-glucose 6-phosphate. Positions 632 to 738 (QGYRYPRPAS…PTSSLGEERN (107 aa)) are disordered. Phosphoserine; by DYRK2, GSK3-alpha, GSK3-beta and PASK is present on S641. 6 positions are modified to phosphoserine: S645, S649, S652, S653, S657, and S672. Acidic residues predominate over residues 658 to 681 (EDEEEPRDGPLGEDSERYDEEEEA). The span at 682–695 (AKDRRNIRAPEWPR) shows a compositional bias: basic and acidic residues. S698, S709, and S711 each carry phosphoserine. Low complexity predominate over residues 698-738 (SCSSSTGGSKRSNSVDTGPSSSLSTPTEPLSPTSSLGEERN). T722 and T724 each carry phosphothreonine. S728 and S732 each carry phosphoserine.

Belongs to the glycosyltransferase 3 family. Part of the GYS1-GYG1 complex, a heterooctamer composed of a tetramer of GYS1 and 2 dimers of GYG1, where each GYS1 protomer binds to one GYG1 subunit (via GYG1 C-terminus); the GYS1 tetramer may dissociate from GYG1 dimers to continue glycogen polymerization on its own. In terms of processing, primed phosphorylation at Ser-657 (site 5) by CSNK2A1 and CSNK2A2 is required for inhibitory phosphorylation at Ser-641 (site 3a), Ser-645 (site 3b), Ser-649 (site 3c) and Ser-653 (site 4) by GSK3A an GSK3B. Phosphorylated at Ser-641 by PASK, leading to inactivation; phosphorylation by PASK is inhibited by glycogen. Phosphorylated at Ser-641 by DYRK2, leading to inactivation. Dephosphorylation at Ser-641 and Ser-645 by PP1 activates the enzyme. Phosphorylation at Ser-8 by AMPK inactivates the enzyme activity.

The enzyme catalyses [(1-&gt;4)-alpha-D-glucosyl](n) + UDP-alpha-D-glucose = [(1-&gt;4)-alpha-D-glucosyl](n+1) + UDP + H(+). Its pathway is glycan biosynthesis; glycogen biosynthesis. With respect to regulation, allosteric activation by glucose-6-phosphate. Phosphorylation reduces the activity towards UDP-glucose. When in the non-phosphorylated state, glycogen synthase does not require glucose-6-phosphate as an allosteric activator; when phosphorylated it does. Its function is as follows. Glycogen synthase participates in the glycogen biosynthetic process along with glycogenin and glycogen branching enzyme. Extends the primer composed of a few glucose units formed by glycogenin by adding new glucose units to it. In this context, glycogen synthase transfers the glycosyl residue from UDP-Glc to the non-reducing end of alpha-1,4-glucan. This chain is Glycogen [starch] synthase, muscle (Gys1), found in Mus musculus (Mouse).